A 300-amino-acid polypeptide reads, in one-letter code: Energy-coupling factor transporter ATP-binding protein EcfA2 (300 aa).

One can recognise an ABC transporter domain in the interval 3 to 258 (IKAKNIVKIY…NKFLIENKML (256 aa)). Residue 40–47 (GQTGSGKT) coordinates ATP.

It belongs to the ABC transporter superfamily. Energy-coupling factor EcfA family. In terms of assembly, forms a stable energy-coupling factor (ECF) transporter complex composed of 2 membrane-embedded substrate-binding proteins (S component), 2 ATP-binding proteins (A component) and 2 transmembrane proteins (T component).

It localises to the cell membrane. ATP-binding (A) component of a common energy-coupling factor (ECF) ABC-transporter complex. Unlike classic ABC transporters this ECF transporter provides the energy necessary to transport a number of different substrates. In Mesomycoplasma hyopneumoniae (strain 232) (Mycoplasma hyopneumoniae), this protein is Energy-coupling factor transporter ATP-binding protein EcfA2.